A 433-amino-acid chain; its full sequence is MSKIVKVIAREIIDSRGNPTVEAEVHLEGGFVGMAAAPSGASTGSREALELRDGDKARFLGKGVLKAVGAVNGPIAAALLGKDAQDQAAIDQIMIDLDGTENKSNFGANAILAVSLANAKAAAAAKGLPLYAHIAELNGTPGVYSMPLPMMNIINGGEHADNNVDIQEFMIQPVGAKTLKEAVRMGAEVFHNLAKVLKSKGYNTAVGDEGGFAPNLKSNAEALEVIAEAVAAAGYVLGKDVTLAMDCAASEFYDAEKKEYNLKGEGRIFTSNGFSDFLEDLTTKFPIVSIEDGLDESDWEGFAYQTQKLGKKIQIVGDDLFVTNTKILKRGIDNGIANSILIKFNQIGSLTETLAAIKMAKDAGYTAVISHRSGETEDATIADLAVGTAAGQIKTGSMSRSDRVAKYNQLIRIEEALGAKAPFNGLKEVKGQA.

Gln-167 contacts (2R)-2-phosphoglycerate. Glu-209 (proton donor) is an active-site residue. Asp-246, Glu-291, and Asp-318 together coordinate Mg(2+). Residues Lys-343, Arg-372, Ser-373, and Lys-394 each contribute to the (2R)-2-phosphoglycerate site. Lys-343 functions as the Proton acceptor in the catalytic mechanism.

It belongs to the enolase family. As to quaternary structure, component of the RNA degradosome, a multiprotein complex involved in RNA processing and mRNA degradation. It depends on Mg(2+) as a cofactor.

The protein resides in the cytoplasm. It localises to the secreted. Its subcellular location is the cell surface. It carries out the reaction (2R)-2-phosphoglycerate = phosphoenolpyruvate + H2O. Its pathway is carbohydrate degradation; glycolysis; pyruvate from D-glyceraldehyde 3-phosphate: step 4/5. Functionally, catalyzes the reversible conversion of 2-phosphoglycerate (2-PG) into phosphoenolpyruvate (PEP). It is essential for the degradation of carbohydrates via glycolysis. The polypeptide is Enolase (Tolumonas auensis (strain DSM 9187 / NBRC 110442 / TA 4)).